The following is a 446-amino-acid chain: Delta(8)-fatty-acid desaturase (446 aa).

The region spanning 5 to 89 (KKYISVGELE…LEDYLVSEIS (85 aa)) is the Cytochrome b5 heme-binding domain. Residues His40 and His63 each contribute to the heme site. Helical transmembrane passes span 112-132 (VIYC…GVLC) and 136-156 (LWVH…AAYL). The Histidine box-1 signature appears at 158–162 (HDSGH). Helical transmembrane passes span 174–195 (FAQV…KWTH), 253–273 (IYLV…LLLF), 282–302 (ALNI…VSCL), and 309–329 (VLFV…FTLN). Residues 195-199 (HNAHH) carry the Histidine box-2 motif. The short motif at 372–376 (QLEHH) is the Histidine box-3 element.

It belongs to the fatty acid desaturase type 1 family. Requires Fe cation as cofactor. In terms of tissue distribution, expressed only in young leaves.

The protein localises to the membrane. The catalysed reaction is an N-acyl-(4R)-4-hydroxysphinganine + 2 Fe(II)-[cytochrome b5] + O2 + 2 H(+) = a (4R,8E)-4-hydroxysphingenine ceramide + 2 Fe(III)-[cytochrome b5] + 2 H2O. It carries out the reaction an N-acyl-(4R)-4-hydroxysphinganine + 2 Fe(II)-[cytochrome b5] + O2 + 2 H(+) = a (4R,8Z)-4-hydroxysphing-8-enine ceramide + 2 Fe(III)-[cytochrome b5] + 2 H2O. Plays a major role as delta(8)-fatty-acid desaturase which introduces a double bond at the 8-position in the long-chain base (LCB) of ceramides with or without a hydroxy group at the 4-position. The enzyme produces both the 8E and 8Z isomers (in a 4:1 ratio). This structural modification contributes to the quantitative partitioning of ceramides between the two major sphingolipid classes, glucosylceramides and glycosylinositolphosphoryl ceramides. Sphingolipids are important membrane components involved in environmental stress responses, such as resistance to chilling, and act as cell signaling molecules. This chain is Delta(8)-fatty-acid desaturase (sld1), found in Borago officinalis (Bourrache).